A 314-amino-acid chain; its full sequence is Solute carrier family 25 member 33 (314 aa).

Solcar repeat units lie at residues 4–111 (KDTL…SKET), 119–206 (NSGV…LKKY), and 224–308 (SDFL…IVHL). 6 helical membrane passes run 7 to 27 (LLHL…TCPL), 44 to 58 (VFQV…AGVI), 114 to 134 (GIFV…AAFI), 183 to 203 (LTAS…YETL), 226 to 246 (FLGL…IAYP), and 291 to 311 (QIPN…LLAE).

It belongs to the mitochondrial carrier (TC 2.A.29) family.

It localises to the mitochondrion inner membrane. In terms of biological role, mitochondrial transporter that imports/exports pyrimidine nucleotides into and from mitochondria which participates in dendritic cell endocytosis. This Danio rerio (Zebrafish) protein is Solute carrier family 25 member 33 (slc25a33).